The primary structure comprises 154 residues: Superoxide dismutase [Cu-Zn] (154 aa).

Cu cation contacts are provided by histidine 47, histidine 49, and histidine 64. Cysteines 58 and 147 form a disulfide. Histidine 64, histidine 72, histidine 81, and aspartate 84 together coordinate Zn(2+). A Cu cation-binding site is contributed by histidine 121. A substrate-binding site is contributed by arginine 144.

The protein belongs to the Cu-Zn superoxide dismutase family. Homodimer. Cu cation serves as cofactor. Requires Zn(2+) as cofactor.

It is found in the cytoplasm. The catalysed reaction is 2 superoxide + 2 H(+) = H2O2 + O2. Destroys radicals which are normally produced within the cells and which are toxic to biological systems. The protein is Superoxide dismutase [Cu-Zn] (sodC) of Aspergillus fumigatus (strain ATCC MYA-4609 / CBS 101355 / FGSC A1100 / Af293) (Neosartorya fumigata).